We begin with the raw amino-acid sequence, 176 residues long: Small ribosomal subunit protein uS5 (176 aa).

In terms of domain architecture, S5 DRBM spans leucine 11 to valine 74.

Belongs to the universal ribosomal protein uS5 family. In terms of assembly, part of the 30S ribosomal subunit. Contacts proteins S4 and S8.

Its function is as follows. With S4 and S12 plays an important role in translational accuracy. Located at the back of the 30S subunit body where it stabilizes the conformation of the head with respect to the body. This Rickettsia rickettsii (strain Iowa) protein is Small ribosomal subunit protein uS5.